A 193-amino-acid polypeptide reads, in one-letter code: Resuscitation-promoting factor Rpf1 (193 aa).

The first 35 residues, 1 to 35 (MGRHSTKTSSAFTKLAASTIAFGAAATIMAPSASA), serve as a signal peptide directing secretion.

It belongs to the transglycosylase family. Rpf subfamily.

The protein localises to the secreted. In terms of biological role, factor that stimulates resuscitation of dormant cells. Has peptidoglycan (PG) hydrolytic activity. Active in the pM concentration range. Has little to no effect on actively-growing cells. PG fragments could either directly activate the resuscitation pathway of dormant bacteria or serve as a substrate for endogenous Rpf, resulting in low molecular weight products with resuscitation activity. The chain is Resuscitation-promoting factor Rpf1 (rpf1) from Corynebacterium glutamicum (strain ATCC 13032 / DSM 20300 / JCM 1318 / BCRC 11384 / CCUG 27702 / LMG 3730 / NBRC 12168 / NCIMB 10025 / NRRL B-2784 / 534).